The chain runs to 87 residues: Small ribosomal subunit protein bS20 (87 aa).

It belongs to the bacterial ribosomal protein bS20 family.

Functionally, binds directly to 16S ribosomal RNA. The chain is Small ribosomal subunit protein bS20 from Shigella flexneri.